A 350-amino-acid chain; its full sequence is Glycerol-1-phosphate dehydrogenase [NAD(P)+] (350 aa).

NAD(+) contacts are provided by residues 97–101 and 119–122; these read GSKID and TTPS. Residue aspartate 124 participates in substrate binding. Serine 128 is an NAD(+) binding site. Aspartate 171 is a substrate binding site. Residues aspartate 171 and histidine 251 each coordinate Zn(2+). Histidine 255 contacts substrate. Histidine 267 serves as a coordination point for Zn(2+).

The protein belongs to the glycerol-1-phosphate dehydrogenase family. Requires Zn(2+) as cofactor.

It localises to the cytoplasm. The enzyme catalyses sn-glycerol 1-phosphate + NAD(+) = dihydroxyacetone phosphate + NADH + H(+). The catalysed reaction is sn-glycerol 1-phosphate + NADP(+) = dihydroxyacetone phosphate + NADPH + H(+). It participates in membrane lipid metabolism; glycerophospholipid metabolism. Functionally, catalyzes the NAD(P)H-dependent reduction of dihydroxyacetonephosphate (DHAP or glycerone phosphate) to glycerol 1-phosphate (G1P). The G1P thus generated is used as the glycerophosphate backbone of phospholipids in the cellular membranes of Archaea. This is Glycerol-1-phosphate dehydrogenase [NAD(P)+] from Picrophilus torridus (strain ATCC 700027 / DSM 9790 / JCM 10055 / NBRC 100828 / KAW 2/3).